Reading from the N-terminus, the 460-residue chain is MKNYAIILAAGKGTRMNSGLPKVLHKVSGLSMLEHVLKSVSALAPQKQLTVIGHQAEQVRAVLGDQLLTVVQEEQLGTGHAVMMAEEELSGLEGQTLVIAGDTPLIRGESLKALLDYHIREKNVATILTANAKDPFGYGRIIRNAAGEVVNIVEQKDANEAEQEVKEINTGTYIFDNKRLFEALKHLTTDNAQGEYYLTDVISIFKASQEKVGAYLLKDFDESLGVNDRLALAQAEVIMQERINKQHMLNGVTLQNPAATYIESSVEIAPDVLIEANVTLKGQTRIGSRSVITNGSYILDSRLGEGVVVSQSVIEGSVLADGVTVGPYAHIRPDSQLDECVHIGNFVEVKGSHLGANTKAGHLTYLGNAEIGSEVNIGAGSITVNYDGQRKYQTVIGDHAFIGSHSTLIAPVEVGENALTAAGSTIAQSVPADSVAIGRSRQVVKEGYAKRLPHHPDQPQ.

The segment at 1-229 (MKNYAIILAA…FDESLGVNDR (229 aa)) is pyrophosphorylase. Residues 8–11 (LAAG), K22, Q72, and 77–78 (GT) each bind UDP-N-acetyl-alpha-D-glucosamine. D102 serves as a coordination point for Mg(2+). UDP-N-acetyl-alpha-D-glucosamine is bound by residues G139, E154, N169, and N227. Position 227 (N227) interacts with Mg(2+). The linker stretch occupies residues 230–250 (LALAQAEVIMQERINKQHMLN). Residues 251–460 (GVTLQNPAAT…RLPHHPDQPQ (210 aa)) are N-acetyltransferase. The UDP-N-acetyl-alpha-D-glucosamine site is built by R332 and K350. H362 (proton acceptor) is an active-site residue. 2 residues coordinate UDP-N-acetyl-alpha-D-glucosamine: Y365 and N376. Acetyl-CoA-binding positions include A379, 385–386 (NY), S404, A422, and R439.

The protein in the N-terminal section; belongs to the N-acetylglucosamine-1-phosphate uridyltransferase family. In the C-terminal section; belongs to the transferase hexapeptide repeat family. As to quaternary structure, homotrimer. Mg(2+) is required as a cofactor.

It localises to the cytoplasm. The enzyme catalyses alpha-D-glucosamine 1-phosphate + acetyl-CoA = N-acetyl-alpha-D-glucosamine 1-phosphate + CoA + H(+). The catalysed reaction is N-acetyl-alpha-D-glucosamine 1-phosphate + UTP + H(+) = UDP-N-acetyl-alpha-D-glucosamine + diphosphate. It participates in nucleotide-sugar biosynthesis; UDP-N-acetyl-alpha-D-glucosamine biosynthesis; N-acetyl-alpha-D-glucosamine 1-phosphate from alpha-D-glucosamine 6-phosphate (route II): step 2/2. Its pathway is nucleotide-sugar biosynthesis; UDP-N-acetyl-alpha-D-glucosamine biosynthesis; UDP-N-acetyl-alpha-D-glucosamine from N-acetyl-alpha-D-glucosamine 1-phosphate: step 1/1. It functions in the pathway bacterial outer membrane biogenesis; LPS lipid A biosynthesis. Catalyzes the last two sequential reactions in the de novo biosynthetic pathway for UDP-N-acetylglucosamine (UDP-GlcNAc). The C-terminal domain catalyzes the transfer of acetyl group from acetyl coenzyme A to glucosamine-1-phosphate (GlcN-1-P) to produce N-acetylglucosamine-1-phosphate (GlcNAc-1-P), which is converted into UDP-GlcNAc by the transfer of uridine 5-monophosphate (from uridine 5-triphosphate), a reaction catalyzed by the N-terminal domain. In Streptococcus equi subsp. zooepidemicus (strain ATCC 35246 / C74-63), this protein is Bifunctional protein GlmU.